A 249-amino-acid polypeptide reads, in one-letter code: Methylthioribulose-1-phosphate dehydratase (249 aa).

C102 is a substrate binding site. The Zn(2+) site is built by H120 and H122. E148 acts as the Proton donor/acceptor in catalysis. A Zn(2+)-binding site is contributed by H205.

Belongs to the aldolase class II family. MtnB subfamily. The cofactor is Zn(2+).

It localises to the cytoplasm. It catalyses the reaction 5-(methylsulfanyl)-D-ribulose 1-phosphate = 5-methylsulfanyl-2,3-dioxopentyl phosphate + H2O. It functions in the pathway amino-acid biosynthesis; L-methionine biosynthesis via salvage pathway; L-methionine from S-methyl-5-thio-alpha-D-ribose 1-phosphate: step 2/6. In terms of biological role, catalyzes the dehydration of methylthioribulose-1-phosphate (MTRu-1-P) into 2,3-diketo-5-methylthiopentyl-1-phosphate (DK-MTP-1-P). The polypeptide is Methylthioribulose-1-phosphate dehydratase (Botryotinia fuckeliana (strain B05.10) (Noble rot fungus)).